The chain runs to 107 residues: MSLMYPSVDELLNKVDSRYKLIALASKRAKELEELPRLKDELLKLKREEKPTDRDKKQIQEIAAQLETLVGPTLDNYKSVKPIGRALEEINAGNVQIDPVNKDKSED.

This sequence belongs to the RNA polymerase subunit omega family. In terms of assembly, the RNAP catalytic core consists of 2 alpha, 1 beta, 1 beta' and 1 omega subunit. When a sigma factor is associated with the core the holoenzyme is formed, which can initiate transcription.

It catalyses the reaction RNA(n) + a ribonucleoside 5'-triphosphate = RNA(n+1) + diphosphate. Functionally, promotes RNA polymerase assembly. Latches the N- and C-terminal regions of the beta' subunit thereby facilitating its interaction with the beta and alpha subunits. This Oenococcus oeni (strain ATCC BAA-331 / PSU-1) protein is DNA-directed RNA polymerase subunit omega.